We begin with the raw amino-acid sequence, 154 residues long: Small ribosomal subunit protein bS16 (154 aa).

Low complexity predominate over residues 111-121; that stretch reads AAAGLAEAPTK. The tract at residues 111–154 is disordered; sequence AAAGLAEAPTKPAKKAAKAEAAPKTDEAAPKTEEQAGAGSGEQG. The span at 127–144 shows a compositional bias: basic and acidic residues; it reads AKAEAAPKTDEAAPKTEE.

The protein belongs to the bacterial ribosomal protein bS16 family.

The protein is Small ribosomal subunit protein bS16 of Salinispora tropica (strain ATCC BAA-916 / DSM 44818 / JCM 13857 / NBRC 105044 / CNB-440).